The primary structure comprises 234 residues: tRNA (guanine-N(1)-)-methyltransferase (234 aa).

S-adenosyl-L-methionine-binding positions include G110 and 134–139 (IGDYVL).

It belongs to the RNA methyltransferase TrmD family. As to quaternary structure, homodimer.

Its subcellular location is the cytoplasm. The catalysed reaction is guanosine(37) in tRNA + S-adenosyl-L-methionine = N(1)-methylguanosine(37) in tRNA + S-adenosyl-L-homocysteine + H(+). Functionally, specifically methylates guanosine-37 in various tRNAs. This chain is tRNA (guanine-N(1)-)-methyltransferase, found in Tropheryma whipplei (strain TW08/27) (Whipple's bacillus).